A 381-amino-acid chain; its full sequence is DNA replication and repair protein RecF (381 aa).

30–37 (GENAQGKT) lines the ATP pocket.

It belongs to the RecF family.

It localises to the cytoplasm. Functionally, the RecF protein is involved in DNA metabolism; it is required for DNA replication and normal SOS inducibility. RecF binds preferentially to single-stranded, linear DNA. It also seems to bind ATP. This Lactobacillus delbrueckii subsp. bulgaricus (strain ATCC 11842 / DSM 20081 / BCRC 10696 / JCM 1002 / NBRC 13953 / NCIMB 11778 / NCTC 12712 / WDCM 00102 / Lb 14) protein is DNA replication and repair protein RecF.